A 424-amino-acid polypeptide reads, in one-letter code: Tyrosine--tRNA ligase (424 aa).

Residue Tyr-37 participates in L-tyrosine binding. A 'HIGH' region motif is present at residues 42–51; the sequence is PTADSLHIGS. Residues Tyr-174 and Gln-178 each contribute to the L-tyrosine site. The 'KMSKS' region motif lies at 234–238; the sequence is KFGKT. Residue Lys-237 coordinates ATP. In terms of domain architecture, S4 RNA-binding spans 357-422; it reads SGLIDALAAG…RGKKLYALVD (66 aa).

It belongs to the class-I aminoacyl-tRNA synthetase family. TyrS type 1 subfamily. In terms of assembly, homodimer.

The protein localises to the cytoplasm. The enzyme catalyses tRNA(Tyr) + L-tyrosine + ATP = L-tyrosyl-tRNA(Tyr) + AMP + diphosphate + H(+). Its function is as follows. Catalyzes the attachment of tyrosine to tRNA(Tyr) in a two-step reaction: tyrosine is first activated by ATP to form Tyr-AMP and then transferred to the acceptor end of tRNA(Tyr). The sequence is that of Tyrosine--tRNA ligase from Chromobacterium violaceum (strain ATCC 12472 / DSM 30191 / JCM 1249 / CCUG 213 / NBRC 12614 / NCIMB 9131 / NCTC 9757 / MK).